The chain runs to 83 residues: Erabutoxin b (83 aa).

Residues 1–21 (MKTLLLTLVVVTIVCLDLGYT) form the signal peptide. Residues 24 to 38 (CFNHQSSQPQTTKTC) are loop I. Disulfide bonds link Cys24-Cys45, Cys38-Cys62, Cys64-Cys75, and Cys76-Cys81. The stretch between loop I and loop II stretch occupies residues 39–44 (SPGESS). Residues 45–62 (CYHKQWSDFRGTIIERGC) are loop II. Positions 64–75 (CPTVKPGIKLSC) are loop III.

This sequence belongs to the three-finger toxin family. Short-chain subfamily. Type I alpha-neurotoxin sub-subfamily. As to expression, expressed by the venom gland.

The protein localises to the secreted. Binds with high affinity to muscular nicotinic acetylcholine receptors (nAChRs) (tested on Torpedo marmorata, Kd=0.07 nM), and with low affinity to neuronal alpha-7/CHRNA7 nAChRs (tested on chimeric alpha-7/CHRNA7, Kd=22 uM) and inhibit acetylcholine from binding to the receptor, thereby impairing neuromuscular transmission. Produces peripheral paralysis by blocking neuromuscular transmission at the postsynaptic site. This Laticauda semifasciata (Black-banded sea krait) protein is Erabutoxin b.